Here is a 1964-residue protein sequence, read N- to C-terminus: Neurogenic locus notch homolog protein 4 (1964 aa).

A signal peptide spans 1–20 (MQPQLLLLLLLPLNFPVILT). 4 consecutive EGF-like domains span residues 21-60 (RELL…ETCQ), 61-112 (FPDP…DRCQ), 115-152 (LEEL…EQCQ), and 153-189 (LRDF…HTCE). The Extracellular segment spans residues 21–1443 (RELLCGGSPE…TRPSANQLPW (1423 aa)). 95 disulfides stabilise this stretch: C25–C38, C32–C48, C50–C59, C65–C77, C71–C100, C102–C111, C119–C130, C124–C140, C142–C151, C157–C168, C162–C177, C179–C188, C195–C208, C202–C217, C219–C228, C235–C246, C240–C259, C261–C270, C277–C288, C282–C297, C299–C308, C315–C329, C323–C338, C340–C349, C356–C367, C361–C376, C378–C387, C393–C404, C398–C415, C417–C426, C433–C449, C443–C458, C460–C469, C476–C487, C481–C496, C498–C507, C514–C525, C519–C534, C536–C545, C552–C563, C557–C572, C574–C583, C590–C601, C595–C610, C612–C621, C626–C637, C631–C646, C648–C655, C662–C669, C664–C674, C676–C685, C692–C703, C697–C712, C714–C723, C730–C741, C735–C750, C752–C761, C768–C779, C773–C788, C790–C799, C807–C818, C812–C827, C829–C838, C845–C856, C850–C865, C867–C876, C882–C903, C897–C912, C914–C923, C930–C941, C935–C950, C952–C961, C968–C979, C973–C988, C990–C999, C1006–C1019, C1011–C1028, C1030–C1039, C1046–C1057, C1051–C1069, C1071–C1080, C1087–C1098, C1092–C1110, C1112–C1121, C1130–C1142, C1136–C1155, C1157–C1166, C1174–C1187, C1183–C1199, C1210–C1234, C1216–C1229, C1225–C1241, C1247–C1273, C1255–C1268, and C1264–C1280. Residues 191–229 (DINECFLEPGPCPQGTSCHNTLGSYQCLCPVGQEGPQCK) enclose the EGF-like 5; calcium-binding domain. The EGF-like 6 domain maps to 231–271 (RKGACPPGSCLNGGTCQLVPEGHSTFHLCLCPPGFTGLDCE). Residues 273–309 (NPDDCVRHQCQNGATCLDGLDTYTCLCPKTWKGWDCS) enclose the EGF-like 7; calcium-binding domain. The EGF-like 8; calcium-binding domain occupies 311 to 350 (DIDECEARGPPRCRNGGTCQNTAGSFHCVCVSGWGGAGCE). Residues 352–388 (NLDDCAAATCAPGSTCIDRVGSFSCLCPPGRTGLLCH) enclose the EGF-like 9; calcium-binding domain. Residues 389 to 427 (LEDMCLSQPCHVNAQCSTNPLTGSTLCICQPGYSGSTCH) form the EGF-like 10 domain. In terms of domain architecture, EGF-like 11; calcium-binding spans 429 to 470 (DLDECQMAQQGPSPCEHGGSCINTPGSFNCLCLPGYTGSRCE). The 37-residue stretch at 472-508 (DHNECLSQPCHPGSTCLDLLATFHCLCPPGLEGRLCE) folds into the EGF-like 12; calcium-binding domain. Residues 510–546 (EVNECTSNPCLNQAACHDLLNGFQCLCLPGFTGARCE) enclose the EGF-like 13; calcium-binding domain. The 37-residue stretch at 548-584 (DMDECSSTPCANGGRCRDQPGAFYCECLPGFEGPHCE) folds into the EGF-like 14; calcium-binding domain. Positions 586–622 (EVDECLSDPCPVGASCLDLPGAFFCLCRPGFTGQLCE) constitute an EGF-like 15; calcium-binding domain. EGF-like domains lie at 623–656 (VPLC…PGCV), 658–686 (AEDN…PECE), 688–724 (ELGG…LTCS), 726–762 (EVTA…RHCQ), 764–800 (AVDH…LHCE), 803–839 (TNPS…SSCQ), 841–877 (LIDL…ALCD), 878–924 (FPLS…KLCQ), 926–962 (NVNP…QNCS), 964–1000 (VLDA…LRCE), 1002–1040 (DVDE…QRCE), 1042–1081 (EMDL…PTCS), 1083–1122 (KALS…PDCL), and 1126–1167 (APPG…PRCQ). N-linked (GlcNAc...) asparagine glycosylation is present at N711. Residue N960 is glycosylated (N-linked (GlcNAc...) asparagine). N-linked (GlcNAc...) asparagine glycosylation occurs at N1139. 3 LNR repeats span residues 1166–1209 (CQRP…PWKG), 1210–1241 (CPPH…GYDC), and 1247–1287 (CIPA…GEDS). The tract at residues 1345-1369 (EELSGARDSSSWERQAPPTQPLGKE) is disordered. Residues 1444–1464 (PILCSPVVGVLLLALGALLVL) form a helical membrane-spanning segment. Topologically, residues 1465–1964 (QLIRRRRREH…PLNSVVRNLN (500 aa)) are cytoplasmic. Residues 1516 to 1535 (VDEDGVAMCSGPEEGEAEET) are disordered. ANK repeat units follow at residues 1628-1657 (TGET…NPNQ), 1661-1691 (AGRT…TVDA), 1695-1724 (DGTT…DVGA), 1728-1757 (RGKT…DKDA), and 1761-1790 (REQT…ARGL). Residues 1879–1907 (RSGSCGGPTTRGRRFSAGSRGRRGARASQ) are disordered.

Belongs to the NOTCH family. Heterodimer of a C-terminal fragment N(TM) and a N-terminal fragment N(EC) which are probably linked by disulfide bonds. Interacts with MAML1, MAML2 and MAML3 which act as transcriptional coactivators for NOTCH4. In terms of processing, synthesized in the endoplasmic reticulum as an inactive form which is proteolytically cleaved by a furin-like convertase in the trans-Golgi network before it reaches the plasma membrane to yield an active, ligand-accessible form. Cleavage results in a C-terminal fragment N(TM) and a N-terminal fragment N(EC). Following ligand binding, it is cleaved by TNF-alpha converting enzyme (TACE) to yield a membrane-associated intermediate fragment called notch extracellular truncation (NEXT). This fragment is then cleaved by presenilin dependent gamma-secretase to release a notch-derived peptide containing the intracellular domain (NICD) from the membrane. Phosphorylated. As to expression, highly expressed in lung, moderately in heart kidney, and at lower levels in the ovary and skeletal muscle. A very low expression is seen in the brain, intestine, liver and testis.

It is found in the cell membrane. The protein localises to the nucleus. Its function is as follows. Functions as a receptor for membrane-bound ligands Jagged1, Jagged2 and Delta1 to regulate cell-fate determination. Upon ligand activation through the released notch intracellular domain (NICD) it forms a transcriptional activator complex with RBPJ/RBPSUH and activates genes of the enhancer of split locus. Affects the implementation of differentiation, proliferation and apoptotic programs. May regulate branching morphogenesis in the developing vascular system. This is Neurogenic locus notch homolog protein 4 from Mus musculus (Mouse).